The following is a 206-amino-acid chain: NADH-quinone oxidoreductase subunit C (206 aa).

Belongs to the complex I 30 kDa subunit family. NDH-1 is composed of 14 different subunits. Subunits NuoB, C, D, E, F, and G constitute the peripheral sector of the complex.

Its subcellular location is the cell inner membrane. The enzyme catalyses a quinone + NADH + 5 H(+)(in) = a quinol + NAD(+) + 4 H(+)(out). Functionally, NDH-1 shuttles electrons from NADH, via FMN and iron-sulfur (Fe-S) centers, to quinones in the respiratory chain. The immediate electron acceptor for the enzyme in this species is believed to be ubiquinone. Couples the redox reaction to proton translocation (for every two electrons transferred, four hydrogen ions are translocated across the cytoplasmic membrane), and thus conserves the redox energy in a proton gradient. This chain is NADH-quinone oxidoreductase subunit C, found in Bordetella avium (strain 197N).